The chain runs to 589 residues: MSSSYWSETSSSSCGTQQLPEVLQCQPQHYHCYHQSSQAQQPPEKNVVYERVRTYSGPMNKVVQALDPFNSREVLSPLKTTSSYQNLVWSDHSQELHSPTLKISTCAPSTLHITQNTEQELHSPTVKLTTYPQTTIRKYVVQNPEQEPLSQFLRGSHFFPGNNVIYEKTIRKVEKLNTDQGCHPQAQCHHHIIQQPQVIHSAHWQQPDSSQQIQAITGNNPISTHIGNELCHSGSSQICEQVIIQDDGPEKLDPRYFGELLADLSRKNTDLYHCLLEHLQRIGGSKQDFESTDESEDIESLIPKGLSEFTKQQIRYILQMRGMSDKSLRLVLSTFSNIREELGHLQNDMTSLENDKMRLEKDLSFKDTQLKEYEELLASVRANNHQQQQGLQDSSSKCQALEENNLSLRHTLSDMEYRLKELEYCKRNLEQENQNLRMQVSETCTGPMLQAKMDEIGNHYTEMVKNLRMEKDREICRLRSQLNQYHKDVSKREGSCSDFQFKLHELTSLLEEKDSLIKRQSEELSKLRQEIYSSHNQPSTGGRTTITTKKYRTQYPILGLLYDDYEYIPPGSETQTIVIEKTEDKYTCP.

Residues 334–443 (TFSNIREELG…QNLRMQVSET (110 aa)) adopt a coiled-coil conformation.

Interacts with nonmuscle actin.

The protein resides in the cell junction. The protein localises to the tight junction. In terms of biological role, plays a key role in the organization of epithelial monolayers by regulating the actin cytoskeleton. May be involved in ovary development. The sequence is that of Protein POF1B (POF1B) from Homo sapiens (Human).